Consider the following 545-residue polypeptide: Propane 2-monooxygenase, hydroxylase component large subunit (545 aa).

Positions 97, 127, 130, 192, 226, and 229 each coordinate Fe cation.

The protein belongs to the TmoA/XamoA family. In terms of assembly, the propane 2-monooxygenase multicomponent enzyme system is composed of an electron transfer component and a monooxygenase component interacting with the effector protein PrmD. The electron transfer component is composed of a reductase (PrmB), and the monooxygenase component is formed by a large subunit (PrmA) and a small subunit (PrmC). Probably requires the presence of the chaperonin-like protein PrmG to ensure a productive folding, resulting of a soluble PrmA, which leads to the active form of PrmABCD. Requires Fe(2+) as cofactor.

It carries out the reaction propane + NADH + O2 + H(+) = propan-2-ol + NAD(+) + H2O. The catalysed reaction is phenol + NADH + O2 + H(+) = hydroquinone + NAD(+) + H2O. Functionally, component of the propane 2-monooxygenase multicomponent enzyme system which is involved in the degradation of propane via the O2-dependent hydroxylation of propane. Under acetone induction, also able to catalyze the oxidation of phenol to yield hydroquinone. The protein is Propane 2-monooxygenase, hydroxylase component large subunit of Gordonia sp. (strain TY-5).